Consider the following 427-residue polypeptide: Homeobox protein knotted-1-like 3 (427 aa).

Disordered regions lie at residues 19 to 49 (QTHH…QPAP) and 272 to 291 (TGVS…EDDQ). Over residues 272–284 (TGVSPGEGTSATM) the composition is skewed to polar residues. The region spanning 330–350 (ELKHELKQGYKEKIVDIREEI) is the ELK domain. The segment at residues 351–414 (LRKRRAGKLP…NQRKRNWHSN (64 aa)) is a DNA-binding region (homeobox; TALE-type).

It belongs to the TALE/KNOX homeobox family. As to expression, maximally expressed in sepals, petals and fully expanded leaves. Also expressed in other flower organs and in developing leaves. Low level expression in stem internodes.

It localises to the nucleus. This is Homeobox protein knotted-1-like 3 from Malus domestica (Apple).